A 161-amino-acid polypeptide reads, in one-letter code: Transcriptional regulator MraZ (161 aa).

2 SpoVT-AbrB domains span residues 7-69 (KELH…EPDV) and 98-141 (LDVV…EPER).

The protein belongs to the MraZ family. As to quaternary structure, forms oligomers.

It is found in the cytoplasm. The protein resides in the nucleoid. This Chlorobium limicola (strain DSM 245 / NBRC 103803 / 6330) protein is Transcriptional regulator MraZ.